The chain runs to 357 residues: Chorismate synthase (357 aa).

Arg-47 contacts NADP(+). Residues 123–125 (RSS), Gly-281, 296–300 (KPTSS), and Arg-324 contribute to the FMN site.

Belongs to the chorismate synthase family. As to quaternary structure, homotetramer. It depends on FMNH2 as a cofactor.

The catalysed reaction is 5-O-(1-carboxyvinyl)-3-phosphoshikimate = chorismate + phosphate. The protein operates within metabolic intermediate biosynthesis; chorismate biosynthesis; chorismate from D-erythrose 4-phosphate and phosphoenolpyruvate: step 7/7. Its function is as follows. Catalyzes the anti-1,4-elimination of the C-3 phosphate and the C-6 proR hydrogen from 5-enolpyruvylshikimate-3-phosphate (EPSP) to yield chorismate, which is the branch point compound that serves as the starting substrate for the three terminal pathways of aromatic amino acid biosynthesis. This reaction introduces a second double bond into the aromatic ring system. The sequence is that of Chorismate synthase from Chlamydia muridarum (strain MoPn / Nigg).